Here is a 376-residue protein sequence, read N- to C-terminus: Erythronate-4-phosphate dehydrogenase (376 aa).

Residues S45 and T66 each contribute to the substrate site. Residues 126–127 (QV), D146, T174, 201–203 (ASR), and D227 each bind NAD(+). R203 is a catalytic residue. Residue E232 is part of the active site. H249 acts as the Proton donor in catalysis. Residue G252 coordinates NAD(+). Y253 is a substrate binding site.

Belongs to the D-isomer specific 2-hydroxyacid dehydrogenase family. PdxB subfamily. Homodimer.

The protein localises to the cytoplasm. The enzyme catalyses 4-phospho-D-erythronate + NAD(+) = (R)-3-hydroxy-2-oxo-4-phosphooxybutanoate + NADH + H(+). It participates in cofactor biosynthesis; pyridoxine 5'-phosphate biosynthesis; pyridoxine 5'-phosphate from D-erythrose 4-phosphate: step 2/5. Catalyzes the oxidation of erythronate-4-phosphate to 3-hydroxy-2-oxo-4-phosphonooxybutanoate. This Ectopseudomonas mendocina (strain ymp) (Pseudomonas mendocina) protein is Erythronate-4-phosphate dehydrogenase.